We begin with the raw amino-acid sequence, 1374 residues long: Probable ATP-dependent RNA helicase spindle-E (1374 aa).

A Helicase ATP-binding domain is found at 46–212 (LARIRENPVI…FKTPKKVGYL (167 aa)). Residue 59-66 (GPTGCGKT) participates in ATP binding. The DEAH box motif lies at 158–161 (DEIH). A Helicase C-terminal domain is found at 265 to 447 (VCDRLIENMH…NVILKAKLLE (183 aa)). A Tudor domain is found at 866–931 (QFAVGQMVAA…RKLDGPLAYM (66 aa)).

It belongs to the DEAD box helicase family. DEAH subfamily.

It is found in the cytoplasm. It catalyses the reaction ATP + H2O = ADP + phosphate + H(+). Functionally, probable ATP-binding RNA helicase which plays a central role during gametogenesis by repressing transposable elements and preventing their mobilization, which is essential for the germline integrity. Acts via the piRNA metabolic process, which mediates the repression of transposable elements during meiosis by forming complexes composed of piRNAs and Piwi proteins and govern the methylation and subsequent repression of transposons. The chain is Probable ATP-dependent RNA helicase spindle-E (spn-E) from Aedes aegypti (Yellowfever mosquito).